The sequence spans 276 residues: Undecaprenyl-diphosphatase (276 aa).

8 helical membrane-spanning segments follow: residues 6-26, 49-69, 89-109, 117-137, 151-171, 181-201, 224-244, and 256-276; these read IEIL…WLPI, EMFF…MFWN, FSLW…GILF, LHTP…FIVI, LADI…LSLI, IIGA…TFFL, AELL…VFVI, and FKVF…ITAI.

Belongs to the UppP family.

The protein resides in the cell membrane. The enzyme catalyses di-trans,octa-cis-undecaprenyl diphosphate + H2O = di-trans,octa-cis-undecaprenyl phosphate + phosphate + H(+). Catalyzes the dephosphorylation of undecaprenyl diphosphate (UPP). Confers resistance to bacitracin. This Enterococcus faecalis (Streptococcus faecalis) protein is Undecaprenyl-diphosphatase.